Reading from the N-terminus, the 423-residue chain is Protein CLP1 homolog (423 aa).

ATP-binding positions include E16, K57, and 119–124 (DVGKST).

The protein belongs to the Clp1 family. Clp1 subfamily.

It localises to the nucleus. In terms of biological role, required for endonucleolytic cleavage during polyadenylation-dependent pre-mRNA 3'-end formation. This chain is Protein CLP1 homolog (cbc), found in Drosophila melanogaster (Fruit fly).